The sequence spans 406 residues: Nicotinate phosphoribosyltransferase (406 aa).

His-225 carries the post-translational modification Phosphohistidine; by autocatalysis.

This sequence belongs to the NAPRTase family. Transiently phosphorylated on a His residue during the reaction cycle. Phosphorylation strongly increases the affinity for substrates and increases the rate of nicotinate D-ribonucleotide production. Dephosphorylation regenerates the low-affinity form of the enzyme, leading to product release.

It catalyses the reaction nicotinate + 5-phospho-alpha-D-ribose 1-diphosphate + ATP + H2O = nicotinate beta-D-ribonucleotide + ADP + phosphate + diphosphate. The protein operates within cofactor biosynthesis; NAD(+) biosynthesis; nicotinate D-ribonucleotide from nicotinate: step 1/1. Functionally, catalyzes the synthesis of beta-nicotinate D-ribonucleotide from nicotinate and 5-phospho-D-ribose 1-phosphate at the expense of ATP. This is Nicotinate phosphoribosyltransferase from Psychromonas ingrahamii (strain DSM 17664 / CCUG 51855 / 37).